A 1387-amino-acid polypeptide reads, in one-letter code: Dicer-like protein 2-1 (1387 aa).

In terms of domain architecture, Helicase ATP-binding spans 26–205 (MFEASLKENI…LLKIESNLDA (180 aa)). ATP is bound at residue 39–46 (MGTGSGKT). Residues 146-149 (DEAH) carry the DEAH box motif. Residues 370–535 (KFRSLLEFLD…AYEDDERRLR (166 aa)) enclose the Helicase C-terminal domain. The Dicer dsRNA-binding fold domain maps to 565-659 (AVAHLNHFCA…LPFKRNLELK (95 aa)). RNase III domains are found at residues 915-1055 (ATRL…IDGG) and 1094-1277 (DDHL…IDSH). Mg(2+) contacts are provided by Glu1133, Asp1263, and Glu1266.

Belongs to the helicase family. Dicer subfamily. Mg(2+) serves as cofactor. Requires Mn(2+) as cofactor.

Dicer-like endonuclease involved in cleaving double-stranded RNA in the RNA interference (RNAi) pathway. Produces 21 to 25 bp dsRNAs (siRNAs) which target the selective destruction of homologous RNAs leading to sequence-specific suppression of gene expression, called post-transcriptional gene silencing (PTGS). Part of a broad host defense response against viral infection and transposons. This Aspergillus niger (strain ATCC MYA-4892 / CBS 513.88 / FGSC A1513) protein is Dicer-like protein 2-1 (dcl2-1).